The primary structure comprises 561 residues: MRLWKSMAWGILLWHSQSGALCPAWPPARAAEEITRLQQQLADWNDIYWKQGVSAVDDSVYDQLSARLVQWQRCVGQDVSSTPVSPPLNGTTMHPVAHTGVRKLADRQAVEQWMRGRSELWVQPKVDGVAVTLVYQNGKLTRAISRGNGLQGEDWTPKIRLIPSIPQTTQGALANAVLQGEIFLQREGHIQQRMGGMNARSKVAGMLMRQDNASALNSLGIFIWAWPDGPANMPERLSQLAKAGFSLTNKYTLAVKDASEVERARQSWLTSALPFVTDGVVIRMAKEPASQHWRPGQGDWLAAWKYPPVAQVAQVSAIQFSVGKSGKITVVASLVPVILDDKRVQRVNIDSVKRWEAWDIAPGDQILVSLAGQGIPRLDEVVWRSRERSKPVPPDSHFNSLTCFYASETCQEQFISRLVWLGSRSALGLDGMGEASWRALHQTHRFKHIFSWLALTSAQIANTPGFAKGKSEQIWRQFNLARRQSFTRWIMAMDIPLTQAALQASGDRSWEQLLMRTEQHWRQLPATGERRAGRVIDWRNNPQIKTLSRWLAAQHIPGFGS.

Catalysis depends on lysine 125, which acts as the N6-AMP-lysine intermediate.

Belongs to the NAD-dependent DNA ligase family. LigB subfamily.

The catalysed reaction is NAD(+) + (deoxyribonucleotide)n-3'-hydroxyl + 5'-phospho-(deoxyribonucleotide)m = (deoxyribonucleotide)n+m + AMP + beta-nicotinamide D-nucleotide.. Its function is as follows. Catalyzes the formation of phosphodiester linkages between 5'-phosphoryl and 3'-hydroxyl groups in double-stranded DNA using NAD as a coenzyme and as the energy source for the reaction. The protein is DNA ligase B of Salmonella enteritidis PT4 (strain P125109).